We begin with the raw amino-acid sequence, 276 residues long: Rhomboid protease GlpG (276 aa).

6 helical membrane-spanning segments follow: residues 94–114, 142–162, 169–189, 192–212, 229–249, and 250–270; these read GPVT…MQIL, ALMH…WYLG, LGSG…GYVQ, FSGP…GYVW, LIIF…GMSM, and ANGA…VDSL. Serine 201 functions as the Nucleophile in the catalytic mechanism. Residue histidine 254 is part of the active site.

Belongs to the peptidase S54 family.

The protein resides in the cell inner membrane. It carries out the reaction Cleaves type-1 transmembrane domains using a catalytic dyad composed of serine and histidine that are contributed by different transmembrane domains.. Rhomboid-type serine protease that catalyzes intramembrane proteolysis. The polypeptide is Rhomboid protease GlpG (Shigella flexneri serotype 5b (strain 8401)).